The following is a 350-amino-acid chain: MTSATTAPHTTQTLQFHPRVAESVATQRGEGWSIQAVQELLDLPFMELLWRAQATHRAHWPQGDIELATLLSVKTGGCPENCGYCPQSAEFDTGVKAEKLMSVQEVTQAAQAAKDAGATRFCMGAAWRAPKDRDIEKMSELITAVKDLGLQTCATLGMLQSHQALALKDAGLDYYNHNLDTAPEYYSDVVSTRQYQDRLDTLRHVRDAGINVCCGGIVGMGEAPVHRAGLIAQLANLNPYPESVPINSLVRVAGTPLANSEPVDPLDFVRVIAVARITMPKARVRLSAGRQQLGDAVQALCFLAGANSIFYGDKLLVTSNPDVEADTQLLAKLGLKGTPNQTTTETACGA.

Positions 63-281 (GDIELATLLS…IAVARITMPK (219 aa)) constitute a Radical SAM core domain. 3 residues coordinate [4Fe-4S] cluster: cysteine 78, cysteine 82, and cysteine 85. [2Fe-2S] cluster-binding residues include cysteine 122, cysteine 153, cysteine 213, and arginine 285.

Belongs to the radical SAM superfamily. Biotin synthase family. Homodimer. [4Fe-4S] cluster is required as a cofactor. The cofactor is [2Fe-2S] cluster.

It carries out the reaction (4R,5S)-dethiobiotin + (sulfur carrier)-SH + 2 reduced [2Fe-2S]-[ferredoxin] + 2 S-adenosyl-L-methionine = (sulfur carrier)-H + biotin + 2 5'-deoxyadenosine + 2 L-methionine + 2 oxidized [2Fe-2S]-[ferredoxin]. It functions in the pathway cofactor biosynthesis; biotin biosynthesis; biotin from 7,8-diaminononanoate: step 2/2. In terms of biological role, catalyzes the conversion of dethiobiotin (DTB) to biotin by the insertion of a sulfur atom into dethiobiotin via a radical-based mechanism. This chain is Biotin synthase, found in Acidovorax ebreus (strain TPSY) (Diaphorobacter sp. (strain TPSY)).